We begin with the raw amino-acid sequence, 249 residues long: 5'-nucleotidase SurE 2 (249 aa).

Residues Asp8, Asp9, Ser40, and Asn90 each contribute to the a divalent metal cation site.

Belongs to the SurE nucleotidase family. Requires a divalent metal cation as cofactor.

It is found in the cytoplasm. It carries out the reaction a ribonucleoside 5'-phosphate + H2O = a ribonucleoside + phosphate. Nucleotidase that shows phosphatase activity on nucleoside 5'-monophosphates. The protein is 5'-nucleotidase SurE 2 of Pyrobaculum aerophilum (strain ATCC 51768 / DSM 7523 / JCM 9630 / CIP 104966 / NBRC 100827 / IM2).